The chain runs to 205 residues: MSRRHSAKYKIDRRVGENIWGRAKSPFNKRNYKPGQHGQNRRNKVSDFGMQLMAKQKLKAYYGDITEKQFAKTYVEAARMKGNSAENLIGLLESRLDAVVYRAKFVPTVFAARQFINHGHVMVNGRRCNIGSARLKPGDVVQVREKSRNLALVLEALGSPERDIPEYVEVDPKAMTATYKRVPALADVPYPVKMEPAQVVEFYSS.

One can recognise an S4 RNA-binding domain in the interval 94-157 (SRLDAVVYRA…RNLALVLEAL (64 aa)).

The protein belongs to the universal ribosomal protein uS4 family. Part of the 30S ribosomal subunit. Contacts protein S5. The interaction surface between S4 and S5 is involved in control of translational fidelity.

One of the primary rRNA binding proteins, it binds directly to 16S rRNA where it nucleates assembly of the body of the 30S subunit. In terms of biological role, with S5 and S12 plays an important role in translational accuracy. The protein is Small ribosomal subunit protein uS4 of Hyphomonas neptunium (strain ATCC 15444).